The following is a 412-amino-acid chain: Cytochrome p450 CYP199A2 (412 aa).

Substrate contacts are provided by residues 94–97 (RPPS) and Ser247. Cys361 is a binding site for heme.

It belongs to the cytochrome P450 family. Interacts with the ferredoxin-like iron-sulfur protein ThcC. The cofactor is heme.

Its subcellular location is the cytoplasm. It carries out the reaction 4-methoxybenzoate + AH2 + O2 = 4-hydroxybenzoate + formaldehyde + A + H2O. Functionally, the oxidative demethylation of 4-methoxybenzoate requires the participation of the monooxygenase CYP199A2, the ferredoxin-like protein ThcC/RPA1872 and a ferredoxin reductase to mediate the transfer of electrons from NADH to CYP199A2. It is also active with 4-ethylbenzoate. This is Cytochrome p450 CYP199A2 from Rhodopseudomonas palustris (strain ATCC BAA-98 / CGA009).